A 441-amino-acid polypeptide reads, in one-letter code: Ribulose bisphosphate carboxylase large chain (441 aa).

Positions 89 and 139 each coordinate substrate. Catalysis depends on Lys141, which acts as the Proton acceptor. Lys143 serves as a coordination point for substrate. The Mg(2+) site is built by Lys167, Asp169, and Glu170. An N6-carboxylysine modification is found at Lys167. Residue His260 is the Proton acceptor of the active site. Positions 261, 293, and 345 each coordinate substrate.

This sequence belongs to the RuBisCO large chain family. Type I subfamily. As to quaternary structure, heterohexadecamer of 8 large chains and 8 small chains; disulfide-linked. The disulfide link is formed within the large subunit homodimers. The cofactor is Mg(2+). In terms of processing, the disulfide bond which can form in the large chain dimeric partners within the hexadecamer appears to be associated with oxidative stress and protein turnover.

It localises to the plastid. The protein resides in the chloroplast. It catalyses the reaction 2 (2R)-3-phosphoglycerate + 2 H(+) = D-ribulose 1,5-bisphosphate + CO2 + H2O. The catalysed reaction is D-ribulose 1,5-bisphosphate + O2 = 2-phosphoglycolate + (2R)-3-phosphoglycerate + 2 H(+). Functionally, ruBisCO catalyzes two reactions: the carboxylation of D-ribulose 1,5-bisphosphate, the primary event in carbon dioxide fixation, as well as the oxidative fragmentation of the pentose substrate in the photorespiration process. Both reactions occur simultaneously and in competition at the same active site. The sequence is that of Ribulose bisphosphate carboxylase large chain from Coriandrum sativum (Coriander).